The primary structure comprises 336 residues: Dihydroorotate dehydrogenase (quinone) (336 aa).

FMN-binding positions include 62–66 and Thr86; that span reads AGLDK. Lys66 provides a ligand contact to substrate. A substrate-binding site is contributed by 111 to 115; that stretch reads NRMGF. FMN is bound by residues Asn139 and Asn172. Substrate is bound at residue Asn172. The active-site Nucleophile is Ser175. Asn177 contacts substrate. FMN-binding residues include Lys217 and Thr245. 246-247 contributes to the substrate binding site; sequence NT. Residues Gly268, Gly297, and 318–319 contribute to the FMN site; that span reads YS.

Belongs to the dihydroorotate dehydrogenase family. Type 2 subfamily. As to quaternary structure, monomer. The cofactor is FMN.

The protein resides in the cell membrane. The catalysed reaction is (S)-dihydroorotate + a quinone = orotate + a quinol. It functions in the pathway pyrimidine metabolism; UMP biosynthesis via de novo pathway; orotate from (S)-dihydroorotate (quinone route): step 1/1. In terms of biological role, catalyzes the conversion of dihydroorotate to orotate with quinone as electron acceptor. This Baumannia cicadellinicola subsp. Homalodisca coagulata protein is Dihydroorotate dehydrogenase (quinone).